The chain runs to 334 residues: Holliday junction branch migration complex subunit RuvB (334 aa).

The large ATPase domain (RuvB-L) stretch occupies residues 4 to 184 (ADRIISASPQ…FGIVQRLEFY (181 aa)). Residues Ile23, Arg24, Gly65, Lys68, Thr69, Thr70, 131–133 (EDY), Arg174, Tyr184, and Arg221 each bind ATP. A Mg(2+)-binding site is contributed by Thr69. Positions 185–255 (NVDDLTSIVK…IAKQALVMLD (71 aa)) are small ATPAse domain (RuvB-S). Residues 258-334 (PQGFDFMDIK…YAHLGISLSE (77 aa)) are head domain (RuvB-H). The DNA site is built by Arg294, Arg313, and Arg318.

Belongs to the RuvB family. As to quaternary structure, homohexamer. Forms an RuvA(8)-RuvB(12)-Holliday junction (HJ) complex. HJ DNA is sandwiched between 2 RuvA tetramers; dsDNA enters through RuvA and exits via RuvB. An RuvB hexamer assembles on each DNA strand where it exits the tetramer. Each RuvB hexamer is contacted by two RuvA subunits (via domain III) on 2 adjacent RuvB subunits; this complex drives branch migration. In the full resolvosome a probable DNA-RuvA(4)-RuvB(12)-RuvC(2) complex forms which resolves the HJ.

Its subcellular location is the cytoplasm. The enzyme catalyses ATP + H2O = ADP + phosphate + H(+). Its function is as follows. The RuvA-RuvB-RuvC complex processes Holliday junction (HJ) DNA during genetic recombination and DNA repair, while the RuvA-RuvB complex plays an important role in the rescue of blocked DNA replication forks via replication fork reversal (RFR). RuvA specifically binds to HJ cruciform DNA, conferring on it an open structure. The RuvB hexamer acts as an ATP-dependent pump, pulling dsDNA into and through the RuvAB complex. RuvB forms 2 homohexamers on either side of HJ DNA bound by 1 or 2 RuvA tetramers; 4 subunits per hexamer contact DNA at a time. Coordinated motions by a converter formed by DNA-disengaged RuvB subunits stimulates ATP hydrolysis and nucleotide exchange. Immobilization of the converter enables RuvB to convert the ATP-contained energy into a lever motion, pulling 2 nucleotides of DNA out of the RuvA tetramer per ATP hydrolyzed, thus driving DNA branch migration. The RuvB motors rotate together with the DNA substrate, which together with the progressing nucleotide cycle form the mechanistic basis for DNA recombination by continuous HJ branch migration. Branch migration allows RuvC to scan DNA until it finds its consensus sequence, where it cleaves and resolves cruciform DNA. This chain is Holliday junction branch migration complex subunit RuvB, found in Haemophilus ducreyi (strain 35000HP / ATCC 700724).